The primary structure comprises 158 residues: Large ribosomal subunit protein uL15 (158 aa).

Positions 1–13 are enriched in basic and acidic residues; the sequence is MKLNEIKDNEGST. The interval 1-45 is disordered; the sequence is MKLNEIKDNEGSTHSRKRLGRGIGSGSGKTGGRGVKGQKSRSGVA. Residues 21–35 show a composition bias toward gly residues; that stretch reads RGIGSGSGKTGGRGV.

Belongs to the universal ribosomal protein uL15 family. Part of the 50S ribosomal subunit.

Functionally, binds to the 23S rRNA. The sequence is that of Large ribosomal subunit protein uL15 from Rhizobium leguminosarum bv. trifolii (strain WSM2304).